A 603-amino-acid polypeptide reads, in one-letter code: Myotubularin (603 aa).

Residues Ser13 and Ser18 each carry the phosphoserine modification. The GRAM domain occupies 29–97 (QDVSETVPRL…GVISRIEKMG (69 aa)). Residues 163–538 (GWTVYNPVEE…RHLELWVNYY (376 aa)) form the Myotubularin phosphatase domain. The a 1,2-diacyl-sn-glycero-3-phospho-(1D-myo-inositol-3,5-bisphosphate) site is built by Asn288, Asn313, and Ile314. A 1,2-diacyl-sn-glycero-3-phospho-(1D-myo-inositol-3-phosphate) is bound by residues Asn288, Asn313, and Ile314. Cys375 (phosphocysteine intermediate) is an active-site residue. A 1,2-diacyl-sn-glycero-3-phospho-(1D-myo-inositol-3,5-bisphosphate) is bound by residues Ser376, Asp377, Gly378, Trp379, Asp380, Arg381, Lys417, and Arg421. The a 1,2-diacyl-sn-glycero-3-phospho-(1D-myo-inositol-3-phosphate) site is built by Ser376, Asp377, Gly378, Trp379, Asp380, and Arg381. Residue Arg421 participates in a 1,2-diacyl-sn-glycero-3-phospho-(1D-myo-inositol-3-phosphate) binding. A Phosphothreonine modification is found at Thr495. Ser588 is modified (phosphoserine).

Belongs to the protein-tyrosine phosphatase family. Non-receptor class myotubularin subfamily. As to quaternary structure, heterodimer with MTMR12. Interacts with KMT2A/MLL1 (via SET domain). Interacts with DES in skeletal muscle but not in cardiac muscle. Interacts with SPEG. As to expression, widely expressed with highest levels detected in heart and muscle and low levels in brain (at protein level). Expressed in skeletal muscles (at protein level).

The protein localises to the cytoplasm. The protein resides in the cell membrane. It is found in the cell projection. Its subcellular location is the filopodium. It localises to the ruffle. The protein localises to the late endosome. The protein resides in the myofibril. It is found in the sarcomere. The enzyme catalyses a 1,2-diacyl-sn-glycero-3-phospho-(1D-myo-inositol-3-phosphate) + H2O = a 1,2-diacyl-sn-glycero-3-phospho-(1D-myo-inositol) + phosphate. It carries out the reaction a 1,2-diacyl-sn-glycero-3-phospho-(1D-myo-inositol-3,5-bisphosphate) + H2O = a 1,2-diacyl-sn-glycero-3-phospho-(1D-myo-inositol-5-phosphate) + phosphate. The catalysed reaction is 1,2-dioctanoyl-sn-glycero-3-phospho-(1-D-myo-inositol-3-phosphate) + H2O = 1,2-dioctanoyl-sn-glycero-3-phospho-(1D-myo-inositol) + phosphate. It catalyses the reaction 1,2-dioctanoyl-sn-glycero-3-phospho-(1D-myo-inositol-3,5-bisphosphate) + H2O = 1,2-dioctanoyl-sn-glycero-3-phospho-(1D-myo-inositol-5-phosphate) + phosphate. The enzyme catalyses 1,2-dihexadecanoyl-sn-glycero-3-phospho-(1D-myo-inositol-3,5-phosphate) + H2O = 1,2-dihexadecanoyl-sn-glycero-3-phospho-(1D-myo-inositol-5-phosphate) + phosphate. With respect to regulation, allosterically activated by phosphatidylinositol 5-phosphate (PI5P). Its function is as follows. Lipid phosphatase which dephosphorylates phosphatidylinositol 3-monophosphate (PI3P) and phosphatidylinositol 3,5-bisphosphate (PI(3,5)P2). Has also been shown to dephosphorylate phosphotyrosine- and phosphoserine-containing peptides. Negatively regulates EGFR degradation through regulation of EGFR trafficking from the late endosome to the lysosome. Plays a role in vacuolar formation and morphology. Regulates desmin intermediate filament assembly and architecture. Plays a role in mitochondrial morphology and positioning. Required for skeletal muscle maintenance but not for myogenesis. In skeletal muscles, stabilizes MTMR12 protein levels. This Mus musculus (Mouse) protein is Myotubularin.